Reading from the N-terminus, the 308-residue chain is Reaction center protein M chain (308 aa).

3 helical membrane passes run 54–80 (GSLG…YQAG), 111–140 (KEGG…RAQA), and 143–168 (MGKH…RPIL). Residues histidine 183 and histidine 203 each contribute to the (7R,8Z)-bacteriochlorophyll b site. Residues 198–226 (FYNPFHGLSIAFLYGSALLFAMHGATILA) traverse the membrane as a helical segment. Residues histidine 220 and glutamate 235 each contribute to the Fe cation site. Residue tryptophan 253 coordinates a ubiquinone. A helical membrane pass occupies residues 260–286 (NATMEGIHRWAIWMAVLVTLTGGIGIL). Fe cation is bound at residue histidine 267.

The protein belongs to the reaction center PufL/M/PsbA/D family. As to quaternary structure, reaction center is composed of four bacteriochlorophylls, two bacteriopheophytins, two ubiquinones, one iron, and three highly hydrophobic polypeptide chains (designated L, M, and H).

It is found in the cellular chromatophore membrane. In terms of biological role, the reaction center is a membrane-bound complex that mediates the initial photochemical event in the electron transfer process of photosynthesis. The sequence is that of Reaction center protein M chain (pufM) from Cereibacter sphaeroides (strain ATCC 17023 / DSM 158 / JCM 6121 / CCUG 31486 / LMG 2827 / NBRC 12203 / NCIMB 8253 / ATH 2.4.1.) (Rhodobacter sphaeroides).